We begin with the raw amino-acid sequence, 166 residues long: RNA pyrophosphohydrolase (166 aa).

Residues 8–158 (PYRSCVGMML…KRPVYERVVK (151 aa)) form the Nudix hydrolase domain. A Nudix box motif is present at residues 47 to 68 (GGIDPGEDYWEAAQRELLEETN).

Belongs to the Nudix hydrolase family. RppH subfamily. Requires a divalent metal cation as cofactor.

In terms of biological role, accelerates the degradation of transcripts by removing pyrophosphate from the 5'-end of triphosphorylated RNA, leading to a more labile monophosphorylated state that can stimulate subsequent ribonuclease cleavage. The protein is RNA pyrophosphohydrolase of Afipia carboxidovorans (strain ATCC 49405 / DSM 1227 / KCTC 32145 / OM5) (Oligotropha carboxidovorans).